The primary structure comprises 95 residues: MNNHFGKGLMAGLKATHADSAVNVTKFCADYKRGFVLGYSHRMYEKTGDRQLSAWEAGILTRRYGLDKEMVMDFFRENNSCSTLRFFMAGYRLEN.

This is an uncharacterized protein from Escherichia coli O6:H1 (strain CFT073 / ATCC 700928 / UPEC).